We begin with the raw amino-acid sequence, 371 residues long: Queuine tRNA-ribosyltransferase (371 aa).

Aspartate 89 acts as the Proton acceptor in catalysis. Substrate contacts are provided by residues 89-93, aspartate 143, glutamine 185, and glycine 212; that span reads DSGGF. Residues 243 to 249 are RNA binding; that stretch reads GVGKPED. Aspartate 262 (nucleophile) is an active-site residue. The interval 267–271 is RNA binding; important for wobble base 34 recognition; sequence TRNAR. Cysteine 300, cysteine 302, cysteine 305, and histidine 331 together coordinate Zn(2+).

Belongs to the queuine tRNA-ribosyltransferase family. In terms of assembly, homodimer. Within each dimer, one monomer is responsible for RNA recognition and catalysis, while the other monomer binds to the replacement base PreQ1. Zn(2+) serves as cofactor.

It carries out the reaction 7-aminomethyl-7-carbaguanine + guanosine(34) in tRNA = 7-aminomethyl-7-carbaguanosine(34) in tRNA + guanine. Its pathway is tRNA modification; tRNA-queuosine biosynthesis. Its function is as follows. Catalyzes the base-exchange of a guanine (G) residue with the queuine precursor 7-aminomethyl-7-deazaguanine (PreQ1) at position 34 (anticodon wobble position) in tRNAs with GU(N) anticodons (tRNA-Asp, -Asn, -His and -Tyr). Catalysis occurs through a double-displacement mechanism. The nucleophile active site attacks the C1' of nucleotide 34 to detach the guanine base from the RNA, forming a covalent enzyme-RNA intermediate. The proton acceptor active site deprotonates the incoming PreQ1, allowing a nucleophilic attack on the C1' of the ribose to form the product. After dissociation, two additional enzymatic reactions on the tRNA convert PreQ1 to queuine (Q), resulting in the hypermodified nucleoside queuosine (7-(((4,5-cis-dihydroxy-2-cyclopenten-1-yl)amino)methyl)-7-deazaguanosine). In Pseudomonas syringae pv. tomato (strain ATCC BAA-871 / DC3000), this protein is Queuine tRNA-ribosyltransferase.